The chain runs to 275 residues: Phosphate import ATP-binding protein PstB 1 (275 aa).

An ABC transporter domain is found at 22–261; sequence LETQAVSVYY…NRTEKIFNSP (240 aa). Position 54–61 (54–61) interacts with ATP; that stretch reads GPSGCGKS.

Belongs to the ABC transporter superfamily. Phosphate importer (TC 3.A.1.7) family. The complex is composed of two ATP-binding proteins (PstB), two transmembrane proteins (PstC and PstA) and a solute-binding protein (PstS).

The protein resides in the cell inner membrane. It carries out the reaction phosphate(out) + ATP + H2O = ADP + 2 phosphate(in) + H(+). Functionally, part of the ABC transporter complex PstSACB involved in phosphate import. Responsible for energy coupling to the transport system. This is Phosphate import ATP-binding protein PstB 1 from Synechococcus sp. (strain JA-2-3B'a(2-13)) (Cyanobacteria bacterium Yellowstone B-Prime).